We begin with the raw amino-acid sequence, 460 residues long: MVKEYKTITQIAGPLVFVEKTEPVGYKEIVTINMPDGTTRRGEVLDSSSDIVVIQIFEGTTGLDKECGVVFTGETLKLPASIDLLGRILSGSGEPLDGGPRIVPDQLLDINGAAMNPYARLPPKDFIQTGISTIDGTNTLVRGQKLPIFSASGLPHNEIALQIARQAAVPGSESAFAVVFAAMGITNEEAQYFMSDFEKTGALERAVVFLNLADDPAVERIVTPRMALTAAEYLAYEHGMHVLVILTDITNYAEALRQMGAARNEIPGRRGYPGYMYTDLATLYERAGIVKGAKGSVTQIPILSMPGDDITHPIPDLSGYITEGQIVVSRELHRKGIYPPINVLPSLSRLMNSGIGADKTREDHKAVSDQMYAGYAEGRDLRGLVAIVGKEALSERDVKFLEFADLFEDQFVRQGRNENRTIADTLDIGWKILAHLPENQLGRIDNKYIQKYHPAHRKGQ.

Belongs to the ATPase alpha/beta chains family. Has multiple subunits with at least A(3), B(3), C, D, E, F, H, I and proteolipid K(x).

It is found in the cell membrane. Component of the A-type ATP synthase that produces ATP from ADP in the presence of a proton gradient across the membrane. The B chain is a regulatory subunit. This chain is A-type ATP synthase subunit B, found in Methanosarcina barkeri (strain Fusaro / DSM 804).